A 353-amino-acid chain; its full sequence is Farnesyl pyrophosphate synthase (353 aa).

3 residues coordinate isopentenyl diphosphate: K57, R60, and Q96. N6-(2-hydroxyisobutyryl)lysine; alternate is present on K57. N6-acetyllysine; alternate is present on K57. The Mg(2+) site is built by D103 and D107. Position 112 (R112) interacts with dimethylallyl diphosphate. R113 is an isopentenyl diphosphate binding site. Dimethylallyl diphosphate is bound by residues K200, T201, Q240, K257, and K266.

It belongs to the FPP/GGPP synthase family. Homodimer. Interacts with RSAD2. The cofactor is Mg(2+).

It is found in the cytoplasm. The enzyme catalyses isopentenyl diphosphate + dimethylallyl diphosphate = (2E)-geranyl diphosphate + diphosphate. The catalysed reaction is isopentenyl diphosphate + (2E)-geranyl diphosphate = (2E,6E)-farnesyl diphosphate + diphosphate. The protein operates within isoprenoid biosynthesis; farnesyl diphosphate biosynthesis; farnesyl diphosphate from geranyl diphosphate and isopentenyl diphosphate: step 1/1. It functions in the pathway isoprenoid biosynthesis; geranyl diphosphate biosynthesis; geranyl diphosphate from dimethylallyl diphosphate and isopentenyl diphosphate: step 1/1. Inactivated by interferon-induced RSAD2. This inactivation may result of disruption of lipid rafts at the plasma membrane, and thus have an antiviral effect since many enveloped viruses need lipid rafts to bud efficiently out of the cell. Key enzyme in isoprenoid biosynthesis which catalyzes the formation of farnesyl diphosphate (FPP), a precursor for several classes of essential metabolites including sterols, dolichols, carotenoids, and ubiquinones. FPP also serves as substrate for protein farnesylation and geranylgeranylation. Catalyzes the sequential condensation of isopentenyl pyrophosphate with the allylic pyrophosphates, dimethylallyl pyrophosphate, and then with the resultant geranylpyrophosphate to the ultimate product farnesyl pyrophosphate. This chain is Farnesyl pyrophosphate synthase (Fdps), found in Mus musculus (Mouse).